The primary structure comprises 199 residues: Achaete-scute homolog 1 (199 aa).

Residues 37–56 are disordered; that stretch reads PAEEQQASKAKPIKRQRSAS. The 53-residue stretch at 81–133 folds into the bHLH domain; the sequence is AAVARRNERERNRVKLVNLGFATLREHVPNGAANKKMSKVETLRSAVEYIRAL. The segment covering 162–179 has biased composition (polar residues); that stretch reads HDMNSMAGSPVSSYSSDE. The interval 162 to 189 is disordered; that stretch reads HDMNSMAGSPVSSYSSDEGSYDPLSPEE.

As to quaternary structure, efficient DNA binding requires dimerization with another bHLH protein. In terms of tissue distribution, neuronal precursor cells.

The protein resides in the nucleus. Functionally, transcription factor that plays a key role in neuronal differentiation: acts as a pioneer transcription factor, accessing closed chromatin to allow other factors to bind and activate neural pathways. Directly binds the E box motif (5'-CANNTG-3') on promoters and promotes transcription of neuronal genes. The combination of three transcription factors, ASCL1, POU3F2/BRN2 and MYT1L, is sufficient to reprogram fibroblasts and other somatic cells into induced neuronal (iN) cells in vitro. The sequence is that of Achaete-scute homolog 1 (ascl1) from Xenopus laevis (African clawed frog).